A 162-amino-acid chain; its full sequence is Large ribosomal subunit protein uL10 (162 aa).

This sequence belongs to the universal ribosomal protein uL10 family. As to quaternary structure, part of the ribosomal stalk of the 50S ribosomal subunit. The N-terminus interacts with L11 and the large rRNA to form the base of the stalk. The C-terminus forms an elongated spine to which L12 dimers bind in a sequential fashion forming a multimeric L10(L12)X complex.

Its function is as follows. Forms part of the ribosomal stalk, playing a central role in the interaction of the ribosome with GTP-bound translation factors. This is Large ribosomal subunit protein uL10 from Borrelia garinii subsp. bavariensis (strain ATCC BAA-2496 / DSM 23469 / PBi) (Borreliella bavariensis).